The chain runs to 551 residues: Chaperonin GroEL 2 (551 aa).

ATP is bound by residues 30-33 (TLGP), Lys-51, 87-91 (DGTTT), Gly-415, and Asp-496.

It belongs to the chaperonin (HSP60) family. Forms a cylinder of 14 subunits composed of two heptameric rings stacked back-to-back. Interacts with the co-chaperonin GroES.

It localises to the cytoplasm. The enzyme catalyses ATP + H2O + a folded polypeptide = ADP + phosphate + an unfolded polypeptide.. Functionally, together with its co-chaperonin GroES, plays an essential role in assisting protein folding. The GroEL-GroES system forms a nano-cage that allows encapsulation of the non-native substrate proteins and provides a physical environment optimized to promote and accelerate protein folding. The polypeptide is Chaperonin GroEL 2 (Rhodopseudomonas palustris (strain BisB18)).